Here is a 990-residue protein sequence, read N- to C-terminus: Serine/threonine-protein kinase ATG1 (990 aa).

Positions phenylalanine 15–isoleucine 334 constitute a Protein kinase domain. Residues isoleucine 21 to valine 29 and lysine 44 each bind ATP. Residue aspartate 165 is the Proton acceptor of the active site. Residues valine 375–alanine 408 show a composition bias toward polar residues. 5 disordered regions span residues valine 375–aspartate 499, serine 529–serine 566, alanine 579–glutamine 614, leucine 750–serine 784, and serine 970–proline 990. Composition is skewed to low complexity over residues serine 529–glycine 554 and proline 587–glycine 613. A compositionally biased stretch (polar residues) spans leucine 750–glutamine 771. Residues glycine 772–serine 784 are compositionally biased toward low complexity.

Belongs to the protein kinase superfamily. Ser/Thr protein kinase family. APG1/unc-51/ULK1 subfamily. In terms of assembly, homodimer. Forms a ternary complex with ATG13 and ATG17.

It is found in the cytoplasm. Its subcellular location is the preautophagosomal structure membrane. The enzyme catalyses L-seryl-[protein] + ATP = O-phospho-L-seryl-[protein] + ADP + H(+). It carries out the reaction L-threonyl-[protein] + ATP = O-phospho-L-threonyl-[protein] + ADP + H(+). Serine/threonine protein kinase involved in the cytoplasm to vacuole transport (Cvt) and found to be essential in autophagy, where it is required for the formation of autophagosomes. Involved in the clearance of protein aggregates which cannot be efficiently cleared by the proteasome. Required for selective autophagic degradation of the nucleus (nucleophagy) as well as for mitophagy which contributes to regulate mitochondrial quantity and quality by eliminating the mitochondria to a basal level to fulfill cellular energy requirements and preventing excess ROS production. Also involved in endoplasmic reticulum-specific autophagic process, in selective removal of ER-associated degradation (ERAD) substrates. Plays a key role in ATG9 and ATG23 cycling through the pre-autophagosomal structure and is necessary to promote ATG18 binding to ATG9 through phosphorylation of ATG9. Catalyzes phosphorylation of ATG4, decreasing the interaction between ATG4 and ATG8 and impairing deconjugation of PE-conjugated forms of ATG8. Required for wild-type budding of haploid sporidia and for complete symptom development during pathogenic growth such as gall formation and teliospore production in ears of mature maize. This Mycosarcoma maydis (Corn smut fungus) protein is Serine/threonine-protein kinase ATG1.